Here is a 350-residue protein sequence, read N- to C-terminus: Biotin synthase (350 aa).

The region spanning 38-257 (NKVQVSTLLS…AVARIIMPMS (220 aa)) is the Radical SAM core domain. Residues C53, C57, and C60 each contribute to the [4Fe-4S] cluster site. Positions 97, 128, 188, and 260 each coordinate [2Fe-2S] cluster.

The protein belongs to the radical SAM superfamily. Biotin synthase family. As to quaternary structure, homodimer. It depends on [4Fe-4S] cluster as a cofactor. The cofactor is [2Fe-2S] cluster.

The enzyme catalyses (4R,5S)-dethiobiotin + (sulfur carrier)-SH + 2 reduced [2Fe-2S]-[ferredoxin] + 2 S-adenosyl-L-methionine = (sulfur carrier)-H + biotin + 2 5'-deoxyadenosine + 2 L-methionine + 2 oxidized [2Fe-2S]-[ferredoxin]. It participates in cofactor biosynthesis; biotin biosynthesis; biotin from 7,8-diaminononanoate: step 2/2. Catalyzes the conversion of dethiobiotin (DTB) to biotin by the insertion of a sulfur atom into dethiobiotin via a radical-based mechanism. This is Biotin synthase from Photobacterium profundum (strain SS9).